We begin with the raw amino-acid sequence, 1196 residues long: DNA-directed RNA polymerase subunit beta (1196 aa).

It belongs to the RNA polymerase beta chain family. The RNAP catalytic core consists of 2 alpha, 1 beta, 1 beta' and 1 omega subunit. When a sigma factor is associated with the core the holoenzyme is formed, which can initiate transcription.

It catalyses the reaction RNA(n) + a ribonucleoside 5'-triphosphate = RNA(n+1) + diphosphate. Functionally, DNA-dependent RNA polymerase catalyzes the transcription of DNA into RNA using the four ribonucleoside triphosphates as substrates. The chain is DNA-directed RNA polymerase subunit beta from Lactococcus lactis subsp. cremoris (strain SK11).